The sequence spans 534 residues: Signal recognition particle subunit SRP54 (534 aa).

Residues 1-296 are G-domain; it reads MVLQDLGRRI…EPKAFIQKLL (296 aa). Residues 109–116, 191–195, and 249–252 contribute to the GTP site; these read GLQGAGKT, DTSGR, and TKTD. The M-domain stretch occupies residues 297–534; sequence GMGDMAGLVE…GGGGGRGRGR (238 aa).

It belongs to the GTP-binding SRP family. SRP54 subfamily. Fungal signal recognition particle consists of a 7S RNA molecule (scR1) and at least six protein subunits: srp72, srp68, srpA/srp54, sec65, srp21 and srp14.

It is found in the cytoplasm. The protein localises to the endoplasmic reticulum. The catalysed reaction is GTP + H2O = GDP + phosphate + H(+). Functionally, signal-recognition-particle (SRP) assembly has a crucial role in targeting secretory proteins to the rough endoplasmic reticulum (ER) membrane. SRP is required for the cotranslational protein translocation for ER import and preferentially recognizes strongly hydrophobic signal sequences. It is involved in targeting the nascent chain-ribosome (RNC) complex to the ER and is proposed to participate in the arrest of nascent chain elongation during membrane targeting. srpA/srp54 binds to the signal sequence of presecretory protein when they emerge from the ribosomes. srpA/srp54 interacts with the scR1 RNA and mediates the association of the resulting SRP-RNC complex with the signal recognition particle receptor (SR) via its alpha subunit srp101. Both, srpA/srp54 and srp101, are locked in their GTP bound forms in the SRP-RNC-SR complex, which dissociates upon transferring the signal sequence to the protein-conducting channel (translocon). After signal sequence transfer, srpA/srp54 and srp101 act as reciprocal GTPase-activating proteins (GAPs), thereby resolving their association. The sequence is that of Signal recognition particle subunit SRP54 (srpA) from Aspergillus niger.